A 503-amino-acid polypeptide reads, in one-letter code: uncharacterized protein (503 aa).

Disordered stretches follow at residues 1-26 and 132-156; these read MADD…SPTT and DQQQ…DNSM. The span at 16–26 shows a compositional bias: low complexity; that stretch reads AQSSVPTSPTT. Residues 147-156 are compositionally biased toward polar residues; it reads TPNSVDDNSM.

This is an uncharacterized protein from Caenorhabditis elegans.